Here is a 350-residue protein sequence, read N- to C-terminus: Phospho-2-dehydro-3-deoxyheptonate aldolase, Phe-sensitive (350 aa).

Residue lysine 244 is modified to N6-acetyllysine.

This sequence belongs to the class-I DAHP synthase family. In terms of assembly, homotetramer.

It catalyses the reaction D-erythrose 4-phosphate + phosphoenolpyruvate + H2O = 7-phospho-2-dehydro-3-deoxy-D-arabino-heptonate + phosphate. It functions in the pathway metabolic intermediate biosynthesis; chorismate biosynthesis; chorismate from D-erythrose 4-phosphate and phosphoenolpyruvate: step 1/7. Functionally, stereospecific condensation of phosphoenolpyruvate (PEP) and D-erythrose-4-phosphate (E4P) giving rise to 3-deoxy-D-arabino-heptulosonate-7-phosphate (DAHP). The protein is Phospho-2-dehydro-3-deoxyheptonate aldolase, Phe-sensitive (aroG) of Escherichia coli O157:H7.